We begin with the raw amino-acid sequence, 208 residues long: Glycerol-3-phosphate acyltransferase 1 (208 aa).

Helical transmembrane passes span 52–72, 77–97, 112–132, 140–160, and 161–181; these read VVLM…YLLI, WVIL…WLDF, FLLP…LVFI, IALA…YGSH, and SEFA…KFVL.

Belongs to the PlsY family. Probably interacts with PlsX.

The protein resides in the cell membrane. It carries out the reaction an acyl phosphate + sn-glycerol 3-phosphate = a 1-acyl-sn-glycero-3-phosphate + phosphate. The protein operates within lipid metabolism; phospholipid metabolism. In terms of biological role, catalyzes the transfer of an acyl group from acyl-phosphate (acyl-PO(4)) to glycerol-3-phosphate (G3P) to form lysophosphatidic acid (LPA). This enzyme utilizes acyl-phosphate as fatty acyl donor, but not acyl-CoA or acyl-ACP. The sequence is that of Glycerol-3-phosphate acyltransferase 1 from Dehalococcoides mccartyi (strain ATCC BAA-2266 / KCTC 15142 / 195) (Dehalococcoides ethenogenes (strain 195)).